The following is a 106-amino-acid chain: Glutaredoxin-1 (106 aa).

The residue at position 2 (A2) is an N-acetylalanine. In terms of domain architecture, Glutaredoxin spans 3 to 106; the sequence is QEFVNCKIQP…TRLKQIGALQ (104 aa). The residue at position 9 (K9) is an N6-succinyllysine. 2 cysteine pairs are disulfide-bonded: C23-C26 and C79-C83.

This sequence belongs to the glutaredoxin family.

Its subcellular location is the cytoplasm. Functionally, has a glutathione-disulfide oxidoreductase activity in the presence of NADPH and glutathione reductase. Reduces low molecular weight disulfides and proteins. This chain is Glutaredoxin-1 (GLRX), found in Homo sapiens (Human).